A 476-amino-acid chain; its full sequence is ATP synthase subunit beta (476 aa).

Residue Gly-162–Thr-169 coordinates ATP.

It belongs to the ATPase alpha/beta chains family. F-type ATPases have 2 components, CF(1) - the catalytic core - and CF(0) - the membrane proton channel. CF(1) has five subunits: alpha(3), beta(3), gamma(1), delta(1), epsilon(1). CF(0) has three main subunits: a(1), b(2) and c(9-12). The alpha and beta chains form an alternating ring which encloses part of the gamma chain. CF(1) is attached to CF(0) by a central stalk formed by the gamma and epsilon chains, while a peripheral stalk is formed by the delta and b chains.

The protein localises to the cell membrane. The catalysed reaction is ATP + H2O + 4 H(+)(in) = ADP + phosphate + 5 H(+)(out). Its function is as follows. Produces ATP from ADP in the presence of a proton gradient across the membrane. The catalytic sites are hosted primarily by the beta subunits. The chain is ATP synthase subunit beta from Mycoplasma capricolum subsp. capricolum (strain California kid / ATCC 27343 / NCTC 10154).